We begin with the raw amino-acid sequence, 398 residues long: Apolipoprotein L1 (398 aa).

Positions Met1 to Ala27 are cleaved as a signal peptide. The segment covering Gln35–Pro47 has biased composition (polar residues). Residues Gln35–Trp55 form a disordered region. A glycan (N-linked (GlcNAc...) asparagine) is linked at Asn261. The tract at residues Pro297 to Gln317 is disordered. A phosphoserine; by FAM20C mark is found at Ser311 and Ser314.

It belongs to the apolipoprotein L family. In plasma, interacts with APOA1 and mainly associated with large high density lipoprotein particles. In terms of processing, phosphorylated by FAM20C in the extracellular medium. Plasma. Found on APOA-I-containing high density lipoprotein (HDL3). Expressed in pancreas, lung, prostate, liver, placenta and spleen.

Its subcellular location is the secreted. May play a role in lipid exchange and transport throughout the body. May participate in reverse cholesterol transport from peripheral cells to the liver. This chain is Apolipoprotein L1 (APOL1), found in Homo sapiens (Human).